Here is a 471-residue protein sequence, read N- to C-terminus: Desmin (471 aa).

Residues 2-109 are head; that stretch reads SQAYSSSQRV…QEFLTTRTNE (108 aa). Serine 7 is modified (phosphoserine; by CDK1). Phosphoserine; by AURKB is present on serine 12. Arginine 16 is subject to Omega-N-methylarginine. Phosphothreonine; by AURKB and ROCK1 is present on threonine 17. Position 28 is a phosphoserine; by CDK1 (serine 28). A Phosphoserine modification is found at serine 31. Serine 32 is modified (phosphoserine; by CDK1). Arginine 37 carries the post-translational modification Asymmetric dimethylarginine; alternate. Omega-N-methylarginine; alternate is present on arginine 37. Serine 45 carries the post-translational modification Phosphoserine. Arginine 58 bears the ADP-ribosylarginine mark. At serine 60 the chain carries Phosphoserine; by AURKB. Omega-N-methylarginine is present on arginine 70. Threonine 77 is subject to Phosphothreonine; by ROCK1. At serine 81 the chain carries Phosphoserine. The IF rod domain maps to 109–417; that stretch reads EKVELQELND…KLLEGEESRI (309 aa). The interval 110-142 is coil 1A; it reads KVELQELNDRFANYIEKVRFLEQQNAALAAEVN. Residues 143-152 are linker 1; sequence RLKGREPTRV. The tract at residues 153–253 is coil 1B; the sequence is AEIYEEELRE…HEEEIRELQA (101 aa). The linker 12 stretch occupies residues 254–269; sequence QLQEQQVQVEMDMSKP. Residues 269-416 are interaction with NEB; the sequence is PDLTAALRDI…RKLLEGEESR (148 aa). Positions 270–288 are coil 2A; sequence DLTAALRDIRAQYETIAAK. The tract at residues 289-296 is linker 2; that stretch reads NISEAEEW. Residues serine 291, serine 359, serine 362, and serine 425 each carry the phosphoserine modification. A coil 2B region spans residues 297-413; it reads YKSKVSDLTQ…ATYRKLLEGE (117 aa). The tail stretch occupies residues 414-471; sequence ESRINLPIQTFSALNFRETSPEQRGSEVHTKKTVMIKTIETRDGEVVSEATQQQHEVL. The interval 439–454 is interaction with CRYAB; the sequence is SEVHTKKTVMIKTIET.

The protein belongs to the intermediate filament family. Homomer. Interacts with DST. Interacts with MTM1. Interacts with EPPK1; interaction is dependent of higher-order structure of intermediate filament. Interacts with CRYAB. Interacts with NEB (via nebulin repeats 160-164). Interacts (via rod region) with NEBL (via nebulin repeats 1-5). Interacts with ASB2; the interaction targets DES for proteasomal degradation. Interacts with PKP1. Interacts with FLII. In terms of processing, ADP-ribosylation prevents ability to form intermediate filaments. Phosphorylation at Ser-7, Ser-28 and Ser-32 by CDK1 and phosphorylation at Ser-60 by AURKB contribute to efficient separation of desmin intermediate filaments during mitosis. Post-translationally, ubiquitination by a SCF-like complex containing ASB2 leads to proteasomal degradation.

The protein resides in the cytoplasm. It is found in the myofibril. It localises to the sarcomere. The protein localises to the z line. Its subcellular location is the cell membrane. The protein resides in the sarcolemma. It is found in the nucleus. It localises to the cell tip. The protein localises to the nucleus envelope. Muscle-specific type III intermediate filament essential for proper muscular structure and function. Plays a crucial role in maintaining the structure of sarcomeres, inter-connecting the Z-disks and forming the myofibrils, linking them not only to the sarcolemmal cytoskeleton, but also to the nucleus and mitochondria, thus providing strength for the muscle fiber during activity. In adult striated muscle they form a fibrous network connecting myofibrils to each other and to the plasma membrane from the periphery of the Z-line structures. May act as a sarcomeric microtubule-anchoring protein: specifically associates with detyrosinated tubulin-alpha chains, leading to buckled microtubules and mechanical resistance to contraction. Required for nuclear membrane integrity, via anchoring at the cell tip and nuclear envelope, resulting in maintenance of microtubule-derived intracellular mechanical forces. Contributes to the transcriptional regulation of the NKX2-5 gene in cardiac progenitor cells during a short period of cardiomyogenesis and in cardiac side population stem cells in the adult. Plays a role in maintaining an optimal conformation of nebulette (NEB) on heart muscle sarcomeres to bind and recruit cardiac alpha-actin. This is Desmin (DES) from Sus scrofa (Pig).